Consider the following 249-residue polypeptide: ATP synthase subunit a (249 aa).

5 helical membrane passes run 33–53, 92–112, 131–151, 196–216, and 217–237; these read GQVI…SIAA, LPFI…GALI, INTT…AGIS, LVVA…LMAL, and GLFT…AYIH.

It belongs to the ATPase A chain family. As to quaternary structure, F-type ATPases have 2 components, CF(1) - the catalytic core - and CF(0) - the membrane proton channel. CF(1) has five subunits: alpha(3), beta(3), gamma(1), delta(1), epsilon(1). CF(0) has four main subunits: a, b, b' and c.

The protein localises to the cellular thylakoid membrane. In terms of biological role, key component of the proton channel; it plays a direct role in the translocation of protons across the membrane. The protein is ATP synthase subunit a of Microcystis aeruginosa (strain NIES-843 / IAM M-2473).